The primary structure comprises 367 residues: Cellular tumor antigen p53 (367 aa).

Residues 1–30 (MAEEMEPLLEPTEVFMDLWSMLPYSMQQLP) form a transcription activation (acidic) region. A disordered region spans residues 30 to 84 (PLPEDHSNWQELSPLEPSDPPPPPPPPPLPLAAAAPPPLNPPTPPRAAPSPVVPS). Pro residues predominate over residues 46–81 (PSDPPPPPPPPPLPLAAAAPPPLNPPTPPRAAPSPV). The DNA-binding element occupies 87–278 (DYGGDFDFRV…KIEEENFRKR (192 aa)). Residues Cys161, His164, Cys224, and Cys228 each coordinate Zn(2+). Residues 259-266 (RVCACPGR) are interaction with DNA. 2 disordered regions span residues 275–303 (FRKR…KKRV) and 333–367 (LAEG…KGSD). Positions 286–302 (KRAMSPPTEAPEPPKKR) match the Bipartite nuclear localization signal motif. Positions 308 to 339 (NEIFYLQVRGRRRYEMLKEINEALQLAEGGSA) are oligomerization. Positions 322 to 333 (EMLKEINEALQL) match the Nuclear export signal motif. Residues 347–364 (RVKVEGPQPSCGKKLLQK) are basic (repression of DNA-binding).

It belongs to the p53 family. As to quaternary structure, binds DNA as a homotetramer. Zn(2+) is required as a cofactor.

The protein localises to the cytoplasm. The protein resides in the nucleus. Multifunctional transcription factor that induces cell cycle arrest, DNA repair or apoptosis upon binding to its target DNA sequence. Acts as a tumor suppressor in many tumor types; induces growth arrest or apoptosis depending on the physiological circumstances and cell type. Negatively regulates cell division by controlling expression of a set of genes required for this process. One of the activated genes is an inhibitor of cyclin-dependent kinases. Apoptosis induction seems to be mediated either by stimulation of BAX and FAS antigen expression, or by repression of Bcl-2 expression. This chain is Cellular tumor antigen p53 (TP53), found in Gallus gallus (Chicken).